Here is a 152-residue protein sequence, read N- to C-terminus: MEQVRKLTGAALEAEGMDLVLAEFKREGGGYILRLYVDKEGGITLGDCTMVSRYVGDLLDAYADEMPRYRLEVSSPGLDRPLTREDHFRRFEGRTALIVTKEPREGRKKFRGVLSGALNGVITLVADEVPMEFALHEIESARLQYKHGESTC.

Belongs to the RimP family.

The protein resides in the cytoplasm. Required for maturation of 30S ribosomal subunits. This is Ribosome maturation factor RimP from Desulfatibacillum aliphaticivorans.